A 178-amino-acid chain; its full sequence is Ribosomal RNA small subunit methyltransferase G (178 aa).

S-adenosyl-L-methionine contacts are provided by residues G54, L59, 105 to 106 (LE), and R120.

The protein belongs to the methyltransferase superfamily. RNA methyltransferase RsmG family.

Its subcellular location is the cytoplasm. The catalysed reaction is guanosine(527) in 16S rRNA + S-adenosyl-L-methionine = N(7)-methylguanosine(527) in 16S rRNA + S-adenosyl-L-homocysteine. Its function is as follows. Specifically methylates the N7 position of guanine in position 527 of 16S rRNA. The polypeptide is Ribosomal RNA small subunit methyltransferase G (Helicobacter pylori (strain J99 / ATCC 700824) (Campylobacter pylori J99)).